Reading from the N-terminus, the 605-residue chain is Proline--tRNA ligase (605 aa).

It belongs to the class-II aminoacyl-tRNA synthetase family. ProS type 1 subfamily. Homodimer.

It is found in the cytoplasm. It catalyses the reaction tRNA(Pro) + L-proline + ATP = L-prolyl-tRNA(Pro) + AMP + diphosphate. In terms of biological role, catalyzes the attachment of proline to tRNA(Pro) in a two-step reaction: proline is first activated by ATP to form Pro-AMP and then transferred to the acceptor end of tRNA(Pro). As ProRS can inadvertently accommodate and process non-cognate amino acids such as alanine and cysteine, to avoid such errors it has two additional distinct editing activities against alanine. One activity is designated as 'pretransfer' editing and involves the tRNA(Pro)-independent hydrolysis of activated Ala-AMP. The other activity is designated 'posttransfer' editing and involves deacylation of mischarged Ala-tRNA(Pro). The misacylated Cys-tRNA(Pro) is not edited by ProRS. The sequence is that of Proline--tRNA ligase from Bifidobacterium adolescentis (strain ATCC 15703 / DSM 20083 / NCTC 11814 / E194a).